The chain runs to 594 residues: Arginine--tRNA ligase (594 aa).

The 'HIGH' region motif lies at 139–149 (ANPTGPLHVGH).

Belongs to the class-I aminoacyl-tRNA synthetase family. In terms of assembly, monomer.

Its subcellular location is the cytoplasm. It carries out the reaction tRNA(Arg) + L-arginine + ATP = L-arginyl-tRNA(Arg) + AMP + diphosphate. This is Arginine--tRNA ligase from Paraburkholderia phymatum (strain DSM 17167 / CIP 108236 / LMG 21445 / STM815) (Burkholderia phymatum).